We begin with the raw amino-acid sequence, 123 residues long: Small ribosomal subunit protein uS12cz/uS12cy (123 aa).

It belongs to the universal ribosomal protein uS12 family. Part of the 30S ribosomal subunit.

Its subcellular location is the plastid. It localises to the chloroplast. In terms of biological role, with S4 and S5 plays an important role in translational accuracy. Located at the interface of the 30S and 50S subunits. This chain is Small ribosomal subunit protein uS12cz/uS12cy (rps12-A), found in Nymphaea alba (White water-lily).